The following is a 121-amino-acid chain: Small ribosomal subunit protein uS13 (121 aa).

The interval 93–121 is disordered; it reads RGLPMRGQRTRTNARTRKGPRKSAAALKK.

This sequence belongs to the universal ribosomal protein uS13 family. As to quaternary structure, part of the 30S ribosomal subunit. Forms a loose heterodimer with protein S19. Forms two bridges to the 50S subunit in the 70S ribosome.

Located at the top of the head of the 30S subunit, it contacts several helices of the 16S rRNA. In the 70S ribosome it contacts the 23S rRNA (bridge B1a) and protein L5 of the 50S subunit (bridge B1b), connecting the 2 subunits; these bridges are implicated in subunit movement. Contacts the tRNAs in the A and P-sites. The polypeptide is Small ribosomal subunit protein uS13 (Methylibium petroleiphilum (strain ATCC BAA-1232 / LMG 22953 / PM1)).